A 449-amino-acid chain; its full sequence is Tubulin beta chain (449 aa).

The GTP site is built by Q11, E69, S138, G142, T143, G144, N204, and N226. E69 contacts Mg(2+).

The protein belongs to the tubulin family. As to quaternary structure, dimer of alpha and beta chains. A typical microtubule is a hollow water-filled tube with an outer diameter of 25 nm and an inner diameter of 15 nM. Alpha-beta heterodimers associate head-to-tail to form protofilaments running lengthwise along the microtubule wall with the beta-tubulin subunit facing the microtubule plus end conferring a structural polarity. Microtubules usually have 13 protofilaments but different protofilament numbers can be found in some organisms and specialized cells. Mg(2+) is required as a cofactor.

It is found in the cytoplasm. The protein localises to the cytoskeleton. In terms of biological role, tubulin is the major constituent of microtubules, a cylinder consisting of laterally associated linear protofilaments composed of alpha- and beta-tubulin heterodimers. Microtubules grow by the addition of GTP-tubulin dimers to the microtubule end, where a stabilizing cap forms. Below the cap, tubulin dimers are in GDP-bound state, owing to GTPase activity of alpha-tubulin. In Candida albicans (Yeast), this protein is Tubulin beta chain (TUB2).